The following is a 218-amino-acid chain: 25 kDa calcium-binding protein (218 aa).

4 consecutive EF-hand domains span residues 24 to 59, 66 to 101, 128 to 163, and 171 to 206; these read GAKT…AYKS, PSSD…YLTG, AKLD…TYAE, and PTKE…SLQK. The Ca(2+) site is built by Asp-37, Arg-43, Asp-48, Asp-79, Asn-81, Asp-83, Asp-90, Asp-141, Asp-143, Ser-145, Gln-147, Glu-152, Asp-184, Asn-186, Asp-188, Ser-190, and Glu-195.

Its function is as follows. Expected to play a crucial role in calcium-dependent regulation of ciliary movement. The sequence is that of 25 kDa calcium-binding protein from Tetrahymena thermophila.